A 793-amino-acid chain; its full sequence is MVKNFFHIRRLKKILAKIKSFEKEMSSLSDLDLQKKTDEFKKRLADGENLDQLLPEAYAVVREVDKRILGLFPYDVQVMGAIVLHEGNIAEMATGEGKTLTATMPLYLNALSGQGAMLVTPNSYLALRDAKEMGPVYRFLGLTIETAVRADESKPLETKEKRRIYQADIIYTTNSALGFDYLIENLAENKKNQFLREFNYVIIDEIDSILLDSAQTPLIISGAPRVQSNFYDMMNTLVQTLYEDEDYCYDDEKNEVWLTQKGIRAAESFLGLNHLFSKENQELVRHLNLALRAHMVYKKDQDYVVRQSENEAEVVLLDRATGRLMELTRLQGGQHQAIEAKEHVKLTQETRAMASITYQNLFKLFRKLSGMTGTGKVVESEFLETYSMSVVKIPTNCPVIRRDYPDQIYQTLPEKVFASLDEVKHYHAKGNPLLIFTGSVEMSEIYSSLLLREGIAHNLLNANNVAREAQMIAESGQLGAVTVATSMAGRGTDIKLGPGVADLGGLVVIGTERMENHRIDLQIRGRSGRQGDPGISKFFISLEDDLLKKWGPDWIKNFYRDYSPEDFKNNPILLKQRRFKKLVSKAQKASEGNAKLSRRLTLEYAQSMKIQRELTYAERNRLLEDTNEMEEEINRVIEYVIKQVAYEQSFENRADFYRFILHHFSNRAERIPQEFDIHSPKEVSHLLQAIAEQELLAKKSYLKSDKLYSQFQRLAILKAIDENWVEQVDYLQQLKSALSGFHTSNKKPIVEYYQEAYDGFEYMKERMKHQIVKNLLMSELALNPKGEVVMYFP.

Residues Q77, 95–99, and D493 contribute to the ATP site; that span reads GEGKT.

The protein belongs to the SecA family. Monomer and homodimer (Potential). Part of the accessory SecA2/SecY2 protein translocation apparatus required to export cell wall protein GspB.

It is found in the cell membrane. The protein localises to the cytoplasm. It catalyses the reaction ATP + H2O + cellular proteinSide 1 = ADP + phosphate + cellular proteinSide 2.. Functionally, part of the accessory SecA2/SecY2 system specifically required to export GspB, a serine-rich repeat cell wall protein encoded upstream in the same operon. This is Protein translocase subunit SecA 2 from Streptococcus gordonii.